Here is a 156-residue protein sequence, read N- to C-terminus: 3-hydroxyacyl-[acyl-carrier-protein] dehydratase FabZ (156 aa).

His-57 is a catalytic residue.

The protein belongs to the thioester dehydratase family. FabZ subfamily.

Its subcellular location is the cytoplasm. It carries out the reaction a (3R)-hydroxyacyl-[ACP] = a (2E)-enoyl-[ACP] + H2O. Functionally, involved in unsaturated fatty acids biosynthesis. Catalyzes the dehydration of short chain beta-hydroxyacyl-ACPs and long chain saturated and unsaturated beta-hydroxyacyl-ACPs. The protein is 3-hydroxyacyl-[acyl-carrier-protein] dehydratase FabZ of Anaeromyxobacter dehalogenans (strain 2CP-1 / ATCC BAA-258).